The sequence spans 910 residues: Ubiquitin carboxyl-terminal hydrolase 9 (910 aa).

The region spanning 19-134 (TTPEEEKRIV…GGPPIERKLI (116 aa)) is the DUSP domain. The interval 68–89 (ISGESSEASRPGPIDNHDIIES) is disordered. A USP domain is found at 303-894 (AGLSNLGNTC…AAYVLFYRRV (592 aa)). Catalysis depends on Cys-312, which acts as the Nucleophile. Catalysis depends on His-852, which acts as the Proton acceptor.

Belongs to the peptidase C19 family.

The catalysed reaction is Thiol-dependent hydrolysis of ester, thioester, amide, peptide and isopeptide bonds formed by the C-terminal Gly of ubiquitin (a 76-residue protein attached to proteins as an intracellular targeting signal).. Its function is as follows. Recognizes and hydrolyzes the peptide bond at the C-terminal Gly of ubiquitin. Involved in the processing of poly-ubiquitin precursors as well as that of ubiquitinated proteins. This Arabidopsis thaliana (Mouse-ear cress) protein is Ubiquitin carboxyl-terminal hydrolase 9 (UBP9).